Here is a 95-residue protein sequence, read N- to C-terminus: Small ribosomal subunit protein bS6 (95 aa).

The protein belongs to the bacterial ribosomal protein bS6 family.

Binds together with bS18 to 16S ribosomal RNA. The polypeptide is Small ribosomal subunit protein bS6 (Caldanaerobacter subterraneus subsp. tengcongensis (strain DSM 15242 / JCM 11007 / NBRC 100824 / MB4) (Thermoanaerobacter tengcongensis)).